The primary structure comprises 382 residues: tRNA (guanine(26)-N(2))-dimethyltransferase (382 aa).

The Trm1 methyltransferase domain maps to 4-373 (VEIIEGKARI…KNLDEIKECI (370 aa)). S-adenosyl-L-methionine contacts are provided by Arg44, Arg69, and Asp87. Positions 246, 249, 263, and 266 each coordinate Zn(2+).

The protein belongs to the class I-like SAM-binding methyltransferase superfamily. Trm1 family.

The catalysed reaction is guanosine(26) in tRNA + 2 S-adenosyl-L-methionine = N(2)-dimethylguanosine(26) in tRNA + 2 S-adenosyl-L-homocysteine + 2 H(+). Functionally, dimethylates a single guanine residue at position 26 of a number of tRNAs using S-adenosyl-L-methionine as donor of the methyl groups. The chain is tRNA (guanine(26)-N(2))-dimethyltransferase from Sulfolobus acidocaldarius (strain ATCC 33909 / DSM 639 / JCM 8929 / NBRC 15157 / NCIMB 11770).